The sequence spans 1485 residues: Dicer-like protein 2 (1485 aa).

Residues 1–11 (MSSQDESASSS) show a composition bias toward low complexity. Residues 1 to 61 (MSSQDESASS…EPQPSGNGPR (61 aa)) form a disordered region. The region spanning 72 to 250 (MFQASMQQNI…MEDLESSLDS (179 aa)) is the Helicase ATP-binding domain. 85 to 92 (MDTGSGKT) contributes to the ATP binding site. The short motif at 193–196 (DEAH) is the DEAH box element. The Helicase C-terminal domain maps to 415–579 (KLQVLLRILR…RYENDMRELD (165 aa)). The Dicer dsRNA-binding fold domain occupies 609–712 (AKGHLEHFCR…LPIRESDFVD (104 aa)). RNase III domains follow at residues 988–1127 (AQEL…IEGG) and 1168–1358 (LGPL…VDSG). 3 residues coordinate Mg(2+): Glu1208, Asp1344, and Glu1347. In terms of domain architecture, DRBM spans 1388–1469 (HPKEELGRVA…ALEVIRVWEE (82 aa)).

Belongs to the helicase family. Dicer subfamily. The cofactor is Mg(2+). Requires Mn(2+) as cofactor.

Its function is as follows. Dicer-like endonuclease involved in cleaving double-stranded RNA in the RNA interference (RNAi) pathway. Produces 21 to 25 bp dsRNAs (siRNAs) which target the selective destruction of homologous RNAs leading to sequence-specific suppression of gene expression, called post-transcriptional gene silencing (PTGS). Part of a broad host defense response against viral infection and transposons. In Pyricularia oryzae (strain 70-15 / ATCC MYA-4617 / FGSC 8958) (Rice blast fungus), this protein is Dicer-like protein 2 (DCL2).